Here is a 407-residue protein sequence, read N- to C-terminus: TOM1-like protein 1 (407 aa).

Glycine 2 carries the N-acetylglycine modification. The VHS domain maps to 55 to 183; it reads ATTENLEEPD…SLKARGIRFP (129 aa). The GAT domain maps to 228 to 315; the sequence is FTAEQTKEAF…TLSKYEEMNK (88 aa). The disordered stretch occupies residues 315–407; sequence KPSAPLTSHE…SSKNDDLIRF (93 aa). Phosphoserine is present on serine 337. Residues 337-347 are compositionally biased toward basic and acidic residues; it reads SPIHGREESLV. Positions 353 to 364 are enriched in gly residues; the sequence is VRGGFHGGGGSG. A compositionally biased stretch (basic and acidic residues) spans 388–407; that stretch reads PDHDPKKEQSSSKNDDLIRF.

The protein belongs to the TOM1 family. Ubiquitously expressed.

It is found in the membrane. Its function is as follows. Might contribute to the loading of the ESCRT machinery. The polypeptide is TOM1-like protein 1 (Arabidopsis thaliana (Mouse-ear cress)).